The following is a 203-amino-acid chain: MSKVIGITGGIATGKSTVSELLTAYGFKIVDADIASREAVKKGSKGLEQVKEIFGEEAIDENGEMNRQYVGEIVFNHPDLREALNEIVHPIVREIMEQEKNNYLEHGYHVIMDIPLLYENELQDTVDEVWVVYTSESIQIDRLMERNNLSLEDAKARVYSQISIDKKSRMANHVIDNLGDKLELKQNLQKLLEEEGYIQSESE.

The 200-residue stretch at 4-203 folds into the DPCK domain; sequence VIGITGGIAT…EEGYIQSESE (200 aa). Residue 12–17 coordinates ATP; that stretch reads ATGKST.

The protein belongs to the CoaE family.

It localises to the cytoplasm. The catalysed reaction is 3'-dephospho-CoA + ATP = ADP + CoA + H(+). It participates in cofactor biosynthesis; coenzyme A biosynthesis; CoA from (R)-pantothenate: step 5/5. Catalyzes the phosphorylation of the 3'-hydroxyl group of dephosphocoenzyme A to form coenzyme A. The polypeptide is Dephospho-CoA kinase (Staphylococcus epidermidis (strain ATCC 12228 / FDA PCI 1200)).